Here is a 168-residue protein sequence, read N- to C-terminus: G/U mismatch-specific DNA glycosylase (168 aa).

Belongs to the uracil-DNA glycosylase (UDG) superfamily. TDG/mug family. As to quaternary structure, binds DNA as a monomer.

The protein resides in the cytoplasm. The enzyme catalyses Specifically hydrolyzes mismatched double-stranded DNA and polynucleotides, releasing free uracil.. In terms of biological role, excises ethenocytosine and uracil, which can arise by alkylation or deamination of cytosine, respectively, from the corresponding mispairs with guanine in ds-DNA. It is capable of hydrolyzing the carbon-nitrogen bond between the sugar-phosphate backbone of the DNA and the mispaired base. The complementary strand guanine functions in substrate recognition. Required for DNA damage lesion repair in stationary-phase cells. The chain is G/U mismatch-specific DNA glycosylase from Cronobacter sakazakii (strain ATCC BAA-894) (Enterobacter sakazakii).